The following is a 134-amino-acid chain: ATP synthase epsilon chain (134 aa).

Belongs to the ATPase epsilon chain family. F-type ATPases have 2 components, CF(1) - the catalytic core - and CF(0) - the membrane proton channel. CF(1) has five subunits: alpha(3), beta(3), gamma(1), delta(1), epsilon(1). CF(0) has three main subunits: a, b and c.

It localises to the cell inner membrane. Its function is as follows. Produces ATP from ADP in the presence of a proton gradient across the membrane. The protein is ATP synthase epsilon chain of Rhizobium meliloti (strain 1021) (Ensifer meliloti).